A 382-amino-acid polypeptide reads, in one-letter code: Mannitol-1-phosphate 5-dehydrogenase (382 aa).

3-14 (ALHFGAGNIGRG) is an NAD(+) binding site.

Belongs to the mannitol dehydrogenase family.

It carries out the reaction D-mannitol 1-phosphate + NAD(+) = beta-D-fructose 6-phosphate + NADH + H(+). The sequence is that of Mannitol-1-phosphate 5-dehydrogenase from Salmonella paratyphi A (strain ATCC 9150 / SARB42).